The following is a 212-amino-acid chain: Large ribosomal subunit protein uL1 (212 aa).

Belongs to the universal ribosomal protein uL1 family. In terms of assembly, part of the 50S ribosomal subunit.

Functionally, binds directly to 23S rRNA. Probably involved in E site tRNA release. In terms of biological role, protein L1 is also a translational repressor protein, it controls the translation of its operon by binding to its mRNA. The protein is Large ribosomal subunit protein uL1 of Methanothermobacter thermautotrophicus (strain ATCC 29096 / DSM 1053 / JCM 10044 / NBRC 100330 / Delta H) (Methanobacterium thermoautotrophicum).